A 314-amino-acid chain; its full sequence is Homoserine O-acetyltransferase (314 aa).

Residue Cys-142 is the Acyl-thioester intermediate of the active site. Lys-163 and Ser-192 together coordinate substrate. The active-site Proton acceptor is His-235. Residue Glu-237 is part of the active site. Substrate is bound at residue Arg-249.

This sequence belongs to the MetA family.

It is found in the cytoplasm. It carries out the reaction L-homoserine + acetyl-CoA = O-acetyl-L-homoserine + CoA. Its pathway is amino-acid biosynthesis; L-methionine biosynthesis via de novo pathway; O-acetyl-L-homoserine from L-homoserine: step 1/1. Functionally, transfers an acetyl group from acetyl-CoA to L-homoserine, forming acetyl-L-homoserine. This chain is Homoserine O-acetyltransferase, found in Azobacteroides pseudotrichonymphae genomovar. CFP2.